The primary structure comprises 247 residues: Ribosomal RNA small subunit methyltransferase J (247 aa).

S-adenosyl-L-methionine is bound by residues 101-102, 117-118, 153-154, and Asp171; these read RD, ER, and SS.

Belongs to the methyltransferase superfamily. RsmJ family.

Its subcellular location is the cytoplasm. The enzyme catalyses guanosine(1516) in 16S rRNA + S-adenosyl-L-methionine = N(2)-methylguanosine(1516) in 16S rRNA + S-adenosyl-L-homocysteine + H(+). In terms of biological role, specifically methylates the guanosine in position 1516 of 16S rRNA. The polypeptide is Ribosomal RNA small subunit methyltransferase J (Photorhabdus laumondii subsp. laumondii (strain DSM 15139 / CIP 105565 / TT01) (Photorhabdus luminescens subsp. laumondii)).